Consider the following 388-residue polypeptide: 4-hydroxy-3-methylbut-2-en-1-yl diphosphate synthase (flavodoxin) (388 aa).

[4Fe-4S] cluster is bound by residues C280, C283, C315, and E322. The tract at residues 369 to 388 is disordered; the sequence is MNSEGGPEATSSGSPVVTVS. Residues 377–388 are compositionally biased toward polar residues; that stretch reads ATSSGSPVVTVS.

Belongs to the IspG family. Requires [4Fe-4S] cluster as cofactor.

The catalysed reaction is (2E)-4-hydroxy-3-methylbut-2-enyl diphosphate + oxidized [flavodoxin] + H2O + 2 H(+) = 2-C-methyl-D-erythritol 2,4-cyclic diphosphate + reduced [flavodoxin]. It functions in the pathway isoprenoid biosynthesis; isopentenyl diphosphate biosynthesis via DXP pathway; isopentenyl diphosphate from 1-deoxy-D-xylulose 5-phosphate: step 5/6. Converts 2C-methyl-D-erythritol 2,4-cyclodiphosphate (ME-2,4cPP) into 1-hydroxy-2-methyl-2-(E)-butenyl 4-diphosphate. The polypeptide is 4-hydroxy-3-methylbut-2-en-1-yl diphosphate synthase (flavodoxin) (Mycolicibacterium paratuberculosis (strain ATCC BAA-968 / K-10) (Mycobacterium paratuberculosis)).